A 367-amino-acid polypeptide reads, in one-letter code: Putative C-&gt;U-editing enzyme APOBEC-4 (367 aa).

Positions 61 to 177 constitute a CMP/dCMP-type deaminase domain; that stretch reads PQTKHLTFYE…AWNREALRSL (117 aa). Zn(2+) is bound at residue His93. Glu95 (proton donor) is an active-site residue. The Zn(2+) site is built by Cys127 and Cys134.

The protein belongs to the cytidine and deoxycytidylate deaminase family. Zn(2+) serves as cofactor. Predominantly expressed in testis.

Putative C to U editing enzyme whose physiological substrate is not yet known. The protein is Putative C-&gt;U-editing enzyme APOBEC-4 (APOBEC4) of Homo sapiens (Human).